The primary structure comprises 1130 residues: 3-hydroxy-3-methylglutaryl-coenzyme A reductase 1 (1130 aa).

Residues 1 to 46 (MATSLITRKLRSAEATNDVEPGWLKRQVTGVLQSISSHACQHPIHT) are Cytoplasmic-facing. A helical membrane pass occupies residues 47–67 (IVVIALLASTTYVGLLEGSLF). The Lumenal segment spans residues 68–242 (DSVRNSRNIA…DLIKHAETID (175 aa)). N-linked (GlcNAc...) asparagine glycosylation is present at Asn-148. An SSD domain is found at 242-415 (DIVIMTLGYL…FTFYTTILCI (174 aa)). A helical transmembrane segment spans residues 243 to 263 (IVIMTLGYLSMHLSFVSLFFS). The Cytoplasmic segment spans residues 264–270 (MRRLGSN). The helical transmembrane segment at 271-291 (FWLAATVLFSGVFAFLFGLLV) threads the bilayer. Residues 292–296 (TTKLG) are Lumenal-facing. Residues 297 to 317 (VPINVLLLSEGLPFLVVTIGF) form a helical membrane-spanning segment. Residues 318 to 366 (EKPIILTRAVLTAAADNRGRAGQASSSTTKSIQDSIQTAIKEQGFEIIR) are Cytoplasmic-facing. Residues 367-387 (DYCIEIAILIAGAASGVQGGL) form a helical membrane-spanning segment. Residues 388-389 (RQ) lie on the Lumenal side of the membrane. The helical transmembrane segment at 390-410 (FCFLAAWILFFDCVLLFTFYT) threads the bilayer. Topologically, residues 411–476 (TILCIKLEIN…RKLRSSSVRR (66 aa)) are cytoplasmic. A helical membrane pass occupies residues 477–497 (FKILMVGGFVLVNVVNLSTIP). At 498–601 (FRDSSQGAGL…ESLLKSIEDP (104 aa)) the chain is on the lumenal side. Residues 602–622 (IISKWIIAALTLSIILNGYLF) form a helical membrane-spanning segment. At 623–1130 (NAARWSIKEP…ARGLTMSSSE (508 aa)) the chain is on the cytoplasmic side. The Charge relay system role is filled by Glu-792. 798–804 (STSRGAK) serves as a coordination point for CoA. NADP(+)-binding positions include 859 to 861 (SRF) and 886 to 894 (DAMGMNMIS). Lys-926 serves as the catalytic Charge relay system. 955–957 (VLK) lines the CoA pocket. Asp-1002 acts as the Charge relay system in catalysis. CoA is bound at residue 1097 to 1098 (AH). Catalysis depends on His-1098, which acts as the Proton donor. NADP(+) is bound at residue 1102-1103 (NR). The span at 1103-1122 (RSAATTRTSTPVSAAVSAAR) shows a compositional bias: low complexity. Residues 1103 to 1130 (RSAATTRTSTPVSAAVSAARGLTMSSSE) form a disordered region.

It belongs to the HMG-CoA reductase family.

The protein resides in the endoplasmic reticulum membrane. The enzyme catalyses (R)-mevalonate + 2 NADP(+) + CoA = (3S)-3-hydroxy-3-methylglutaryl-CoA + 2 NADPH + 2 H(+). It functions in the pathway metabolic intermediate biosynthesis; (R)-mevalonate biosynthesis; (R)-mevalonate from acetyl-CoA: step 3/3. In terms of biological role, HMG-CoA reductase; part of the first module of ergosterol biosynthesis pathway that includes the early steps of the pathway, conserved across all eukaryotes, and which results in the formation of mevalonate from acetyl-coenzyme A (acetyl-CoA). Hmg1 and hmg2 catalyze the reduction of hydroxymethylglutaryl-CoA (HMG-CoA) to mevalonate. The first module starts with the action of the cytosolic acetyl-CoA acetyltransferase erg10B that catalyzes the formation of acetoacetyl-CoA. The hydroxymethylglutaryl-CoA synthases erg13A and erg13B then condense acetyl-CoA with acetoacetyl-CoA to form HMG-CoA. The rate-limiting step of the early module is the reduction to mevalonate by the 3-hydroxy-3-methylglutaryl-coenzyme A (HMG-CoA) reductases hmg1 and hmg2. Mevalonate is also a precursor for the extracellular siderophore triacetylfusarinine C (TAFC). In Aspergillus fumigatus (strain ATCC MYA-4609 / CBS 101355 / FGSC A1100 / Af293) (Neosartorya fumigata), this protein is 3-hydroxy-3-methylglutaryl-coenzyme A reductase 1.